We begin with the raw amino-acid sequence, 146 residues long: Chorion class A protein Ld3/Ld29 (146 aa).

The signal sequence occupies residues 1–21 (MNTFALLSVFIQACLVQSVFS).

Belongs to the chorion protein family.

Functionally, this protein is one of many from the eggshell of the gypsy moth. This is Chorion class A protein Ld3/Ld29 from Lymantria dispar (Gypsy moth).